The sequence spans 123 residues: Large ribosomal subunit protein uL18 (123 aa).

The protein belongs to the universal ribosomal protein uL18 family. Part of the 50S ribosomal subunit; part of the 5S rRNA/L5/L18/L25 subcomplex. Contacts the 5S and 23S rRNAs.

In terms of biological role, this is one of the proteins that bind and probably mediate the attachment of the 5S RNA into the large ribosomal subunit, where it forms part of the central protuberance. This is Large ribosomal subunit protein uL18 from Wolbachia pipientis subsp. Culex pipiens (strain wPip).